We begin with the raw amino-acid sequence, 240 residues long: MLADDRLIVALDVPNAVAGLALAERLGDAVSFYKIGLGMLTGGGLALANELKQEHGKRIFLDMKLFDIGNTVEAAVRGLSQFDLDFLTVHGDPHVVRAAKEGAAGKDLKILAVTILTSLNRDDLDASLIKPGDVHDLVLERAARAFEAGADGVIASPQEAAAIRALPEAAGRLIVTPGIRPAGADLGDQKRVATPANAIADGVDHIVVGRPVVHAPDPRAAALSILAEMTSPQAVAPNRS.

Substrate is bound by residues aspartate 12, lysine 34, 62–71, threonine 117, arginine 180, glutamine 189, glycine 209, and arginine 210; that span reads DMKLFDIGNT. The Proton donor role is filled by lysine 64.

This sequence belongs to the OMP decarboxylase family. Type 1 subfamily. In terms of assembly, homodimer.

The enzyme catalyses orotidine 5'-phosphate + H(+) = UMP + CO2. It functions in the pathway pyrimidine metabolism; UMP biosynthesis via de novo pathway; UMP from orotate: step 2/2. Functionally, catalyzes the decarboxylation of orotidine 5'-monophosphate (OMP) to uridine 5'-monophosphate (UMP). The protein is Orotidine 5'-phosphate decarboxylase of Ruegeria pomeroyi (strain ATCC 700808 / DSM 15171 / DSS-3) (Silicibacter pomeroyi).